The following is a 234-amino-acid chain: S-adenosylmethionine synthase 1 (234 aa).

ATP is bound by residues 10-12 (DGK), 78-81 (SGRF), aspartate 89, 95-96 (RK), alanine 112, lysine 116, and lysine 120. Residue aspartate 89 participates in L-methionine binding. L-methionine is bound at residue lysine 120.

This sequence belongs to the AdoMet synthase family. In terms of assembly, homotetramer. Mn(2+) is required as a cofactor. The cofactor is Mg(2+). Co(2+) serves as cofactor. It depends on K(+) as a cofactor. In terms of tissue distribution, mainly in floral buds and roots.

The protein resides in the cytoplasm. It catalyses the reaction L-methionine + ATP + H2O = S-adenosyl-L-methionine + phosphate + diphosphate. It participates in amino-acid biosynthesis; S-adenosyl-L-methionine biosynthesis; S-adenosyl-L-methionine from L-methionine: step 1/1. In terms of biological role, catalyzes the formation of S-adenosylmethionine from methionine and ATP. The reaction comprises two steps that are both catalyzed by the same enzyme: formation of S-adenosylmethionine (AdoMet) and triphosphate, and subsequent hydrolysis of the triphosphate. The polypeptide is S-adenosylmethionine synthase 1 (SMS-1) (Petroselinum crispum (Parsley)).